Here is a 199-residue protein sequence, read N- to C-terminus: Translation initiation factor IF-3 (199 aa).

Belongs to the IF-3 family. In terms of assembly, monomer.

It is found in the cytoplasm. Its function is as follows. IF-3 binds to the 30S ribosomal subunit and shifts the equilibrium between 70S ribosomes and their 50S and 30S subunits in favor of the free subunits, thus enhancing the availability of 30S subunits on which protein synthesis initiation begins. The protein is Translation initiation factor IF-3 of Mycoplasmopsis pulmonis (strain UAB CTIP) (Mycoplasma pulmonis).